The sequence spans 438 residues: Histidinol dehydrogenase (438 aa).

NAD(+) is bound by residues tyrosine 138, glutamine 199, and asparagine 222. Serine 245, glutamine 267, and histidine 270 together coordinate substrate. Zn(2+) is bound by residues glutamine 267 and histidine 270. Residues glutamate 335 and histidine 336 each act as proton acceptor in the active site. Substrate is bound by residues histidine 336, aspartate 369, glutamate 423, and histidine 428. Residue aspartate 369 coordinates Zn(2+). Histidine 428 lines the Zn(2+) pocket.

This sequence belongs to the histidinol dehydrogenase family. Requires Zn(2+) as cofactor.

The enzyme catalyses L-histidinol + 2 NAD(+) + H2O = L-histidine + 2 NADH + 3 H(+). Its pathway is amino-acid biosynthesis; L-histidine biosynthesis; L-histidine from 5-phospho-alpha-D-ribose 1-diphosphate: step 9/9. In terms of biological role, catalyzes the sequential NAD-dependent oxidations of L-histidinol to L-histidinaldehyde and then to L-histidine. The protein is Histidinol dehydrogenase of Burkholderia lata (strain ATCC 17760 / DSM 23089 / LMG 22485 / NCIMB 9086 / R18194 / 383).